The chain runs to 621 residues: MLLLPSAADGRGTAITHALTSASTLCQVEPVGRWFEAFVKRRNRNASASFQELEDKKELSEESEDEELQLEEFPMLKTLDPKDWKNQDHYAVLGLGHVRYKATQRQIKAAHKAMVLKHHPDKRKAAGEPIKEGDNDYFTCITKAYEMLSDPVKRRAFNSVDPTFDNSVPSKSEAKDNFFEVFTPVFERNSRWSNKKNVPKLGDMNSSFEDVDIFYSFWYNFDSWREFSYLDEEEKEKAECRDERRWIEKQNRATRAQRKKEEMNRIRTLVDNAYSCDPRIKKFKEEEKAKKEAEKKAKAEAKRKEQEAKEKQRQAELEAARLAKEKEEEEVRQQALLAKKEKDIQKKAIKKERQKLRNSCKTWNHFSDNEAERVKMMEEVEKLCDRLELASLQCLNETLTSCTKEVGKAALEKQIEEINEQIRKEKEEAEARMRQASKNTEKSTGGGGNGSKNWSEDDLQLLIKAVNLFPAGTNSRWEVIANYMNIHSSSGVKRTAKDVIGKAKSLQKLDPHQKDDINKKAFDKFKKEHGVVPQADNATPSERFEGPYTDFTPWTTEEQKLLEQALKTYPVNTPERWEKIAEAVPGRTKKDCMKRYKELVEMVKAKKAAQEQVLNASRAKK.

M1 carries the post-translational modification N-acetylmethionine. Positions 23–31 are epitope (recognized by CD8(+) cytotoxic T-lymphocytes); the sequence is STLCQVEPV. 4 positions are modified to phosphoserine: S47, S49, S60, and S63. A J domain is found at 88–161; sequence DHYAVLGLGH…VKRRAFNSVD (74 aa). A ZRF1-UBD region spans residues 160–250; the sequence is VDPTFDNSVP…RDERRWIEKQ (91 aa). Disordered stretches follow at residues 294 to 315 and 426 to 453; these read EKKAKAEAKRKEQEAKEKQRQA and KEEAEARMRQASKNTEKSTGGGGNGSKN. SANT domains follow at residues 449-511 and 549-604; these read NGSK…KLDP and TDFT…EMVK.

As to quaternary structure, component of ribosome-associated complex (RAC), a heterodimer composed of Hsp70/DnaK-type chaperone HSPA14 and Hsp40/DnaJ-type chaperone DNAJC2. Interacts (via ZRF1-UBD region) with ID1. Post-translationally, phosphorylated in M (mitotic) phase. In terms of tissue distribution, widely expressed.

It is found in the nucleus. Its subcellular location is the cytoplasm. The protein localises to the cytosol. Its function is as follows. Acts both as a chaperone in the cytosol and as a chromatin regulator in the nucleus. When cytosolic, acts as a molecular chaperone: component of the ribosome-associated complex (RAC), a complex involved in folding or maintaining nascent polypeptides in a folding-competent state. In the RAC complex, stimulates the ATPase activity of the ribosome-associated pool of Hsp70-type chaperones HSPA14 that bind to the nascent polypeptide chain. When nuclear, mediates the switching from polycomb-repressed genes to an active state: specifically recruited at histone H2A ubiquitinated at 'Lys-119' (H2AK119ub), and promotes the displacement of the polycomb PRC1 complex from chromatin, thereby facilitating transcription activation. In Homo sapiens (Human), this protein is DnaJ homolog subfamily C member 2 (DNAJC2).